The primary structure comprises 321 residues: Olfactory receptor 56B34 (321 aa).

At 1 to 36 (MGTALHETNSSEVHVSEFILLGFPGIHEFQIWLSLP) the chain is on the extracellular side. Residues 37–57 (MALLYIVALGANLLILITIYL) traverse the membrane as a helical segment. At 58–70 (EPTLHQPMYQFLG) the chain is on the cytoplasmic side. Residues 71 to 91 (ILAAVDIGLATTSMPKILAIL) form a helical membrane-spanning segment. Topologically, residues 92–105 (WFDAKTISLPECFA) are extracellular. A disulfide bridge links C103 with C185. A helical transmembrane segment spans residues 106-126 (QIYAIHTFMCMESGVFLCMAI). The Cytoplasmic portion of the chain corresponds to 127–128 (DR). Residues 129–149 (YVAICYPLQYPSIVTEAFVIK) form a helical membrane-spanning segment. The Extracellular segment spans residues 150 to 207 (ATLSMLLRNGLLTIPVPVLAAQRQYCSRNEIDHCLCSNLGVISLACDDITVNRFYQLA). Residues 208-228 (LAWLVVGSDMILVYASYALII) form a helical membrane-spanning segment. Over 229 to 250 (RSVLRLNSTEAASKALSTCSSH) the chain is Cytoplasmic. Residues 251–271 (LILIMFYYTAIVIVSVTHLAG) traverse the membrane as a helical segment. Over 272-275 (RRVP) the chain is Extracellular. A helical membrane pass occupies residues 276-296 (LIPVLLNVMHIVIPPSLNPVV). At 297 to 321 (YALRTQELKVGFRKVFSLSEFVSRK) the chain is on the cytoplasmic side.

The protein belongs to the G-protein coupled receptor 1 family.

The protein resides in the cell membrane. Odorant receptor. The sequence is that of Olfactory receptor 56B34 from Mus musculus (Mouse).